We begin with the raw amino-acid sequence, 326 residues long: Glycerol-3-phosphate dehydrogenase [NAD(P)+] (326 aa).

4 residues coordinate NADPH: W16, R36, R37, and K106. K106 and G132 together coordinate sn-glycerol 3-phosphate. A136 contributes to the NADPH binding site. Sn-glycerol 3-phosphate is bound by residues K187, D240, S250, R251, and N252. K187 acts as the Proton acceptor in catalysis. R251 lines the NADPH pocket. 2 residues coordinate NADPH: V271 and E273.

The protein belongs to the NAD-dependent glycerol-3-phosphate dehydrogenase family.

The protein localises to the cytoplasm. It catalyses the reaction sn-glycerol 3-phosphate + NAD(+) = dihydroxyacetone phosphate + NADH + H(+). The enzyme catalyses sn-glycerol 3-phosphate + NADP(+) = dihydroxyacetone phosphate + NADPH + H(+). It participates in membrane lipid metabolism; glycerophospholipid metabolism. Its function is as follows. Catalyzes the reduction of the glycolytic intermediate dihydroxyacetone phosphate (DHAP) to sn-glycerol 3-phosphate (G3P), the key precursor for phospholipid synthesis. This chain is Glycerol-3-phosphate dehydrogenase [NAD(P)+], found in Deinococcus geothermalis (strain DSM 11300 / CIP 105573 / AG-3a).